The following is a 236-amino-acid chain: Purine nucleoside phosphorylase DeoD-type 2 (236 aa).

Residue His5 coordinates a purine D-ribonucleoside. Phosphate-binding positions include Gly21, Arg25, Arg44, and 88-91 (RVGS). A purine D-ribonucleoside-binding positions include 180–182 (DME) and 204–205 (SD). Residue Asp205 is the Proton donor of the active site.

Belongs to the PNP/UDP phosphorylase family. In terms of assembly, homohexamer; trimer of homodimers.

It catalyses the reaction a purine D-ribonucleoside + phosphate = a purine nucleobase + alpha-D-ribose 1-phosphate. It carries out the reaction a purine 2'-deoxy-D-ribonucleoside + phosphate = a purine nucleobase + 2-deoxy-alpha-D-ribose 1-phosphate. Its function is as follows. Catalyzes the reversible phosphorolytic breakdown of the N-glycosidic bond in the beta-(deoxy)ribonucleoside molecules, with the formation of the corresponding free purine bases and pentose-1-phosphate. The sequence is that of Purine nucleoside phosphorylase DeoD-type 2 from Vibrio vulnificus (strain CMCP6).